A 530-amino-acid chain; its full sequence is MAAYQQEEQMQLPRADAIRSRLIDTFSLIEHLQGLSQAVPRHTIRELLDPSRQKKLVLGDQHQLVRFSIKPQRIEQISHAQRLLSRLHVRCSQRPPLSLWAGWVLECPLFKNFIIFLVFLNTIILMVEIELLESTNTKLWPLKLTLEVAAWFILLIFILEILLKWLSNFSVFWKSAWNVFDFVVTMLSLLPEVVVLVGVTGQSVWLQLLRICRVLRSLKLLAQFRQIQIIILVLVRALKSMTFLLMLLLIFFYIFAVTGVYVFSEYTRSPRQDLEYHVFFSDLPNSLVTVFILFTLDHWYALLQDVWKVPEVSRIFSSIYFILWLLLGSIIFRSIIVAMMVTNFQNIRKELNEEMARREVQLKADMFKRQIIQRRKNMSHEALTSSHSKIEDSSRGASQQRESLDLSEVSEVESNYGATEEDLITSASKTEETLSKKREYQSSSCVSSTSSSYSSSSESRFSESIGRLDWETLVHENLPGLMEMDQDDRVWPRDSLFRYFELLEKLQYNLEERKKLQEFAVQALMNLEDK.

Over 1–108 (MAAYQQEEQM…LWAGWVLECP (108 aa)) the chain is Cytoplasmic. The chain crosses the membrane as a helical span at residues 109-131 (LFKNFIIFLVFLNTIILMVEIEL). Over 132–140 (LESTNTKLW) the chain is Extracellular. Residues 141–166 (PLKLTLEVAAWFILLIFILEILLKWL) traverse the membrane as a helical segment. The Cytoplasmic portion of the chain corresponds to 167–175 (SNFSVFWKS). Residues 176–200 (AWNVFDFVVTMLSLLPEVVVLVGVT) traverse the membrane as a helical segment. Residues 201–203 (GQS) lie on the Extracellular side of the membrane. A helical membrane pass occupies residues 204–222 (VWLQLLRICRVLRSLKLLA). Residues 223–239 (QFRQIQIIILVLVRALK) lie on the Cytoplasmic side of the membrane. A helical transmembrane segment spans residues 240–262 (SMTFLLMLLLIFFYIFAVTGVYV). The Extracellular segment spans residues 263-281 (FSEYTRSPRQDLEYHVFFS). The segment at residues 282 to 294 (DLPNSLVTVFILF) is an intramembrane region (helical; Pore-forming). Residues 295–314 (TLDHWYALLQDVWKVPEVSR) lie on the Extracellular side of the membrane. A helical membrane pass occupies residues 315 to 341 (IFSSIYFILWLLLGSIIFRSIIVAMMV). The Cytoplasmic portion of the chain corresponds to 342-530 (TNFQNIRKEL…VQALMNLEDK (189 aa)). Positions 378–458 (MSHEALTSSH…TSSSYSSSSE (81 aa)) are disordered. Over residues 429–440 (KTEETLSKKREY) the composition is skewed to basic and acidic residues. Positions 442 to 458 (SSSCVSSTSSSYSSSSE) are enriched in low complexity.

The protein belongs to the cation channel sperm-associated (TC 1.A.1.19) family. In terms of assembly, component of the CatSper complex or CatSpermasome composed of the core pore-forming members CATSPER1, CATSPER2, CATSPER3 and CATSPER4 as well as auxiliary members CATSPERB, CATSPERG, CATSPERD, CATSPERE, CATSPERZ, C2CD6/CATSPERT, TMEM249, TMEM262 and EFCAB9. HSPA1 may be an additional auxiliary complex member. The core complex members CATSPER1, CATSPER2, CATSPER3 and CATSPER4 form a heterotetrameric channel. The auxiliary CATSPERB, CATSPERG, CATSPERD and CATSPERE subunits form a pavilion-like structure over the pore which stabilizes the complex through interactions with CATSPER4, CATSPER3, CATSPER1 and CATSPER2 respectively. TMEM262/CATSPERH interacts with CATSPERB, further stabilizing the complex. C2CD6/CATSPERT interacts at least with CATSPERD and is required for targeting the CatSper complex in the flagellar membrane. Interacts with Ca(v)3.3/CACNA1I, leading to suppression of T-type calcium channel activity. In terms of tissue distribution, testis-specific.

It localises to the cell projection. It is found in the cilium. Its subcellular location is the flagellum membrane. The enzyme catalyses Ca(2+)(in) = Ca(2+)(out). Its activity is regulated as follows. The CatSper calcium channel is indirectly activated by extracellular progesterone and prostaglandins following the sequence: progesterone &gt; PGF1-alpha = PGE1 &gt; PGA1 &gt; PGE2 &gt;&gt; PGD2. The CatSper calcium channel is directly inhibited by endocannabinoid 2-arachidonoylglycerol (2AG). Indirect activation by progesterone takes place via the following mechanism: progesterone binds and activates the acylglycerol lipase ABHD2, which in turn mediates hydrolysis of 2AG inhibitor, relieving inhibition of the CatSper channel. The primary effect of progesterone activation is to shift voltage dependence towards more physiological, negative membrane potentials; it is not mediated by metabotropic receptors and second messengers. Sperm capacitation enhances the effect of progesterone by providing additional negative shift. Also activated by the elevation of intracellular pH. Its function is as follows. Pore-forming subunit of the CatSper complex, a sperm-specific voltage-gated calcium channel, that plays a central role in calcium-dependent physiological responses essential for successful fertilization, such as sperm hyperactivation, acrosome reaction and chemotaxis towards the oocyte. This Homo sapiens (Human) protein is Cation channel sperm-associated protein 2 (CATSPER2).